The following is a 440-amino-acid chain: Chromosomal replication initiator protein DnaA (440 aa).

The interval 1–69 (MKERILQEIK…VKVVLGNDAT (69 aa)) is domain I, interacts with DnaA modulators. The interval 69 to 96 (TFEITYEAFEPHSSYSEPLVKKRAVLLT) is domain II. The interval 97-313 (PLNPDYTFEN…GAIIKLLVYK (217 aa)) is domain III, AAA+ region. ADP is bound by residues V108, N113, G140, L141, G142, K143, T144, H145, and R300. ATP is bound at residue G140. Positions 142, 143, and 144 each coordinate ATP. Residue T144 participates in Mg(2+) binding. A domain IV, binds dsDNA region spans residues 314 to 440 (ETTGKEVDLK…GEISRRALSG (127 aa)).

The protein belongs to the DnaA family. In terms of assembly, oligomerizes as a right-handed, spiral filament on DNA at oriC.

Its subcellular location is the cytoplasm. Its function is as follows. Plays an essential role in the initiation and regulation of chromosomal replication. ATP-DnaA binds to the origin of replication (oriC) to initiate formation of the DNA replication initiation complex once per cell cycle. Binds the DnaA box (a 9 base pair repeat at the origin) and separates the double-stranded (ds)DNA. Forms a right-handed helical filament on oriC DNA; dsDNA binds to the exterior of the filament while single-stranded (ss)DNA is stabiized in the filament's interior. The ATP-DnaA-oriC complex binds and stabilizes one strand of the AT-rich DNA unwinding element (DUE), permitting loading of DNA polymerase. After initiation quickly degrades to an ADP-DnaA complex that is not apt for DNA replication. Binds acidic phospholipids. The DnaA box consensus is 5'-[ATC][AT]AC[CT]TACCA[CT][CTA]-3' in this bacterium. Mutagenesis of residues that line the central pore blocks dsDNA separation. The polypeptide is Chromosomal replication initiator protein DnaA (Thermotoga maritima (strain ATCC 43589 / DSM 3109 / JCM 10099 / NBRC 100826 / MSB8)).